The sequence spans 278 residues: Large ribosomal subunit protein uL2 (278 aa).

The segment covering Arg-210–Gln-219 has biased composition (basic residues). Residues Arg-210–Lys-278 are disordered. The span at Lys-258–Ile-270 shows a compositional bias: basic and acidic residues.

The protein belongs to the universal ribosomal protein uL2 family. Part of the 50S ribosomal subunit. Forms a bridge to the 30S subunit in the 70S ribosome.

One of the primary rRNA binding proteins. Required for association of the 30S and 50S subunits to form the 70S ribosome, for tRNA binding and peptide bond formation. It has been suggested to have peptidyltransferase activity; this is somewhat controversial. Makes several contacts with the 16S rRNA in the 70S ribosome. This chain is Large ribosomal subunit protein uL2, found in Lactobacillus acidophilus (strain ATCC 700396 / NCK56 / N2 / NCFM).